We begin with the raw amino-acid sequence, 368 residues long: (Iso)eugenol O-methyltransferase (368 aa).

Positions Met1–Gly2 are excised as a propeptide. S-adenosyl-L-methionine contacts are provided by residues Ser187, Gly211–Gly212, Asp234, Asp254–Met255, and Lys268. His272 serves as the catalytic Proton acceptor.

The protein belongs to the class I-like SAM-binding methyltransferase superfamily. Cation-independent O-methyltransferase family. COMT subfamily. In terms of assembly, homodimer. Expressed in petals, style and stamens, but not in stigma, sepals, leaves or stem tissues.

It catalyses the reaction (E)-isoeugenol + S-adenosyl-L-methionine = (E)-isomethyleugenol + S-adenosyl-L-homocysteine + H(+). Catalyzes the methylation of the para-4-hydroxyl of both eugenol and (iso)eugenol to methyleugenol and isomethyleugenol, respectively. The resulting products are part of a complex mixture of low-molecular-weight volatile compounds emitted by the flowers to attract pollinators. The polypeptide is (Iso)eugenol O-methyltransferase (IEMT1) (Clarkia breweri (Fairy fans)).